Reading from the N-terminus, the 380-residue chain is 3-dehydroquinate synthase (380 aa).

NAD(+)-binding positions include 118–122, 142–143, Lys-155, and Lys-164; these read GVIGD and TS. Zn(2+) contacts are provided by Glu-197, His-259, and His-278.

The protein belongs to the sugar phosphate cyclases superfamily. Dehydroquinate synthase family. It depends on Co(2+) as a cofactor. The cofactor is Zn(2+). Requires NAD(+) as cofactor.

Its subcellular location is the cytoplasm. The enzyme catalyses 7-phospho-2-dehydro-3-deoxy-D-arabino-heptonate = 3-dehydroquinate + phosphate. It functions in the pathway metabolic intermediate biosynthesis; chorismate biosynthesis; chorismate from D-erythrose 4-phosphate and phosphoenolpyruvate: step 2/7. Its function is as follows. Catalyzes the conversion of 3-deoxy-D-arabino-heptulosonate 7-phosphate (DAHP) to dehydroquinate (DHQ). In Sinorhizobium medicae (strain WSM419) (Ensifer medicae), this protein is 3-dehydroquinate synthase.